A 242-amino-acid chain; its full sequence is Zinc finger protein ZOP1 (242 aa).

Residues 11–42 (KWCEFCKIWIQNNPTSIRNHDLGKRHRECVDK) form a Matrin-type zinc finger. The stretch at 42–71 (KKLTDMRERSAAKDKELKKNEKLLQQIEAK) forms a coiled coil. The interval 154-242 (VKKPVSSSGA…PLLGLYNRPF (89 aa)) is disordered. Over residues 155–172 (KKPVSSSGAGPSVGKPPG) the composition is skewed to low complexity. Over residues 201–233 (RQDEKPKKVSAEEKAALKAREAARKRVEDREKP) the composition is skewed to basic and acidic residues.

Component of a pre-mRNA splicing complex. Interacts with STA1. Interacts with PRP31.

The protein resides in the nucleus. It localises to the cajal body. In terms of biological role, nucleic acid-binding protein that promotes Pol IV-dependent small interfering RNA (siRNA) accumulation, DNA methylation and transcriptional silencing. May possess both RNA-directed DNA methylation (RdDM)-dependent and -independent roles in transcriptional silencing. Acts as a pre-mRNA splicing factor that associates with several typical components of the splicing machinery as well as with Pol II. The protein is Zinc finger protein ZOP1 of Arabidopsis thaliana (Mouse-ear cress).